We begin with the raw amino-acid sequence, 387 residues long: MKKVSVLGSTGSVGKKTVDLLSKRKEEYQVEALSAHSNFALLAHQAKLLNAKYVAISDERLYKDLKESLLGTDVKIAIGATNIATIPVDLSVVAIVGIAGLGPVMEVIESGTKVIALANKESIVCGGKLLLKKAKEKNVQIIPIDSEHNAIFQILQNDDKCVEKIILTASGGPFLNYSLEQLRNVMVDKALSHPTWNMGKKISVDSATMMNKALEIIEAHNLFNISPDKIEAIVHPESIVHGIVTYKDGFNFAVLAETDMAIPISYALSGPERSALNRKLDLTKQGKLTFQEPDHKRFPALKLSMAVLNSSAPQTNSIVLNAANEIAVNEFLKSRIGFLKIVEVVESTMESFGSYTDINSLSDIINIDYESRIIAHKIVESKVVAYS.

NADPH-binding residues include Thr10, Gly11, Ser12, Val13, Asn38, and Asn119. Residue Lys120 coordinates 1-deoxy-D-xylulose 5-phosphate. Glu121 lines the NADPH pocket. Mn(2+) is bound at residue Asp145. Positions 146, 147, 170, and 193 each coordinate 1-deoxy-D-xylulose 5-phosphate. Residue Glu147 participates in Mn(2+) binding. Gly199 provides a ligand contact to NADPH. 4 residues coordinate 1-deoxy-D-xylulose 5-phosphate: Ser206, Asn211, Lys212, and Glu215. Mn(2+) is bound at residue Glu215.

This sequence belongs to the DXR family. It depends on Mg(2+) as a cofactor. Mn(2+) serves as cofactor.

The enzyme catalyses 2-C-methyl-D-erythritol 4-phosphate + NADP(+) = 1-deoxy-D-xylulose 5-phosphate + NADPH + H(+). Its pathway is isoprenoid biosynthesis; isopentenyl diphosphate biosynthesis via DXP pathway; isopentenyl diphosphate from 1-deoxy-D-xylulose 5-phosphate: step 1/6. Catalyzes the NADPH-dependent rearrangement and reduction of 1-deoxy-D-xylulose-5-phosphate (DXP) to 2-C-methyl-D-erythritol 4-phosphate (MEP). This Wolbachia pipientis wMel protein is 1-deoxy-D-xylulose 5-phosphate reductoisomerase.